The chain runs to 148 residues: Large ribosomal subunit protein bL9 (148 aa).

This sequence belongs to the bacterial ribosomal protein bL9 family.

In terms of biological role, binds to the 23S rRNA. This is Large ribosomal subunit protein bL9 from Solibacter usitatus (strain Ellin6076).